A 463-amino-acid chain; its full sequence is Carnosine N-methyltransferase (463 aa).

2 disordered regions span residues 1-64 (MTKN…SQLK) and 79-104 (KHNHDHSHDHNHDYDDNNEDDEEKEE). Low complexity predominate over residues 9 to 58 (KSNNSNISNNNNNNNNNNNNNNNNNNNNNNNNNNNNNNNNNNNNNNNNKN). Over residues 79 to 93 (KHNHDHSHDHNHDYD) the composition is skewed to basic and acidic residues. Positions 94–103 (DNNEDDEEKE) are enriched in acidic residues. S-adenosyl-L-methionine-binding residues include Gln215, Arg218, Gly260, Glu281, Asp351, Phe352, and Cys367. Asp371 serves as a coordination point for carnosine. Tyr379 provides a ligand contact to S-adenosyl-L-methionine. Residues His402 and Tyr450 each contribute to the carnosine site.

Belongs to the carnosine N-methyltransferase family.

It carries out the reaction carnosine + S-adenosyl-L-methionine = anserine + S-adenosyl-L-homocysteine + H(+). Functionally, N-methyltransferase that mediates the formation of anserine (beta-alanyl-N(Pi)-methyl-L-histidine) from carnosine. This is Carnosine N-methyltransferase from Dictyostelium discoideum (Social amoeba).